The primary structure comprises 462 residues: Nuclear factor interleukin-3-regulated protein (462 aa).

A Glycyl lysine isopeptide (Lys-Gly) (interchain with G-Cter in SUMO2) cross-link involves residue Lys-24. Residues 73–136 (DAMYWEKRRK…GLISSTAYAQ (64 aa)) form the bZIP domain. The segment at 79 to 95 (KRRKNNEAAKRSREKRR) is basic motif. The interval 99–106 (LVLENKLI) is leucine-zipper. Disordered regions lie at residues 189-237 (DVSE…DDRG) and 258-302 (SPPL…IHSP). Residues 201–210 (ESSVQGSCRS) are compositionally biased toward polar residues. A Glycyl lysine isopeptide (Lys-Gly) (interchain with G-Cter in SUMO2) cross-link involves residue Lys-214. Lys-219 participates in a covalent cross-link: Glycyl lysine isopeptide (Lys-Gly) (interchain with G-Cter in SUMO1); alternate. Lys-219 is covalently cross-linked (Glycyl lysine isopeptide (Lys-Gly) (interchain with G-Cter in SUMO2); alternate). A compositionally biased stretch (basic and acidic residues) spans 227–237 (SYTREPRDDRG). Residues 264–274 (VNRSSSNSPRT) are compositionally biased toward polar residues. The necessary for transcriptional repression and sufficient for interaction with DR1 stretch occupies residues 299 to 363 (IHSPVELKHV…PIDMTSKRHF (65 aa)). Ser-301 bears the Phosphoserine mark. Glycyl lysine isopeptide (Lys-Gly) (interchain with G-Cter in SUMO2) cross-links involve residues Lys-306, Lys-314, Lys-326, Lys-332, Lys-337, and Lys-350. At Ser-353 the chain carries Phosphoserine. Glycyl lysine isopeptide (Lys-Gly) (interchain with G-Cter in SUMO2) cross-links involve residues Lys-360, Lys-394, Lys-401, Lys-406, Lys-412, Lys-419, Lys-424, Lys-434, and Lys-448.

The protein belongs to the bZIP family. NFIL3 subfamily. Homodimer. Binds DNA as a dimer. Interacts with DR1. Interacts with PER2 and CRY2. Interacts with NR0B2. Interacts with MYSM1. In terms of tissue distribution, expressed in bladder stomach, thyroid, spinal cord, lymph node, trachea, adrenal gland, bone marrow and muscle.

It localises to the nucleus. Functionally, acts as a transcriptional regulator that recognizes and binds to the sequence 5'-[GA]TTA[CT]GTAA[CT]-3', a sequence present in many cellular and viral promoters. Represses transcription from promoters with activating transcription factor (ATF) sites. Represses promoter activity in osteoblasts. Represses transcriptional activity of PER1. Represses transcriptional activity of PER2 via the B-site on the promoter. Activates transcription from the interleukin-3 promoter in T-cells. Competes for the same consensus-binding site with PAR DNA-binding factors (DBP, HLF and TEF). Component of the circadian clock that acts as a negative regulator for the circadian expression of PER2 oscillation in the cell-autonomous core clock. Protects pro-B cells from programmed cell death. Represses the transcription of CYP2A5. Positively regulates the expression and activity of CES2 by antagonizing the repressive action of NR1D1 on CES2. Required for the development of natural killer cell precursors. This Homo sapiens (Human) protein is Nuclear factor interleukin-3-regulated protein (NFIL3).